The primary structure comprises 129 residues: uncharacterized protein (129 aa).

Helical transmembrane passes span 49–69 (LWSL…IVGV), 72–92 (FTIF…NLIF), and 101–118 (YFNC…NLLQ).

The protein resides in the membrane. This is an uncharacterized protein from Saccharomyces cerevisiae (strain ATCC 204508 / S288c) (Baker's yeast).